Reading from the N-terminus, the 158-residue chain is Protein NrdI (158 aa).

It belongs to the NrdI family.

In terms of biological role, probably involved in ribonucleotide reductase function. In Rhodococcus jostii (strain RHA1), this protein is Protein NrdI.